Consider the following 421-residue polypeptide: Peptide chain release factor subunit 1 (421 aa).

Belongs to the eukaryotic release factor 1 family. Heterodimer of two subunits, one of which binds GTP.

The protein localises to the cytoplasm. In terms of biological role, directs the termination of nascent peptide synthesis (translation) in response to the termination codons UAA, UAG and UGA. The protein is Peptide chain release factor subunit 1 (prf1) of Methanocaldococcus jannaschii (strain ATCC 43067 / DSM 2661 / JAL-1 / JCM 10045 / NBRC 100440) (Methanococcus jannaschii).